Consider the following 810-residue polypeptide: RING finger protein unkempt homolog (810 aa).

The tract at residues 1-24 (MSKGPGPGGSAASSAPPAATAQVL) is disordered. The span at 10-19 (SAASSAPPAA) shows a compositional bias: low complexity. 5 C3H1-type zinc fingers span residues 84–113 (YSPD…HRTT), 124–154 (YYKT…HGPH), 215–241 (NYKT…HNSK), 251–285 (KYRS…HTRT), and 293–321 (IYKS…HVEQ). The interval 239 to 265 (NSKDRRRSPRKHKYRSSPCPNVKHGDE) is disordered. Position 240 is a phosphoserine (S240). Positions 241-253 (KDRRRSPRKHKYR) are enriched in basic residues. The interval 324 to 343 (LSDDLQPSSTVSSPTQPGPV) is disordered. Residues 329-343 (QPSSTVSSPTQPGPV) are compositionally biased toward low complexity. Phosphoserine is present on residues S374, S378, and S385. Positions 569 to 585 (SASFHSASPSPPVSLSS) are enriched in low complexity. The tract at residues 569–602 (SASFHSASPSPPVSLSSHFLQQPQGHLSQSENTF) is disordered. Polar residues predominate over residues 586–602 (HFLQQPQGHLSQSENTF). S631 carries the phosphoserine modification. Positions 643–723 (GAAELARLRQ…QEELERLHSG (81 aa)) form a coiled coil. The RING-type; degenerate zinc-finger motif lies at 766–801 (SVKCLKCQEQNRAVLPCQHAVLCELCAEGSECPVCQ).

Belongs to the unkempt family.

It localises to the cytoplasm. In terms of biological role, sequence-specific RNA-binding protein which plays an important role in the establishment and maintenance of the early morphology of cortical neurons during embryonic development. Acts as a translation repressor and controls a translationally regulated cell morphology program to ensure proper structuring of the nervous system. Translational control depends on recognition of its binding element within target mRNAs which consists of a mandatory UAG trimer upstream of a U/A-rich motif. Associated with polysomes. This Canis lupus familiaris (Dog) protein is RING finger protein unkempt homolog (UNK).